We begin with the raw amino-acid sequence, 834 residues long: MNQIEQKWQQIWDDEKAFEVSNECNKPKYYVLEMLPYPSGKIHVGHVRNYSIGDVIARFMNMQGFNVLHPMGWDAFGLPAENAAIKNNVHPKEWTYSNVDNMQQQLKSMGFAYDWSRVINSCDPQYYKYEQKFFLELYERNLAYQKEALVNWDPVDNTVLANEQVVDGRGWRSGAIIEKRYLKQWFLKITDYAEELLNEIKNLKEWPEAVRSMQEKWIGKSIGANFYFKVKDNEDAIIEVFSTKPETIFGASFIGIAFNHPIIEKLISKTPEISNFITKCLHITGSSELEKAEKDGILTSLYVIHPFDPSIILPVIITNFVLMDYGTGAIFGCPAHDERDHELAVKMNLPIKQVIEADIDVHKIAYTEDGILINSDFLNGLTNNEAKQKVIKEIEKLQIGKRSINYRLKDWGISRQRFWGCPIPMIYCKVCDIVPVPYKDLPVTLPDNVKFNGHGNPLDHHPTWKHVNCPKCDKPAIRETDTFDTFFESSWYFTRYCNSHATDMTDKKACDYWLPVDKYIGGIEHAVMHLLYARFFTKVMNEQNYVSVREPFKGLFTQGMVLHATYKDEHNNWLYPDEVVKKDNKFFHKKSGNLVVQGRIEKMSKSKKNLIDLETMQKQYGADAIRLFVLSDSPPEKDLEWSVSGLEGCSRFINKLEHMFKVIASLKDDVTGINKELNRLVHLTIKYVAEDIKHFALNRAIARMRELSNAISSEFSKEVMDVKTVKYGFNVLVQLLNPFIPHITEEIWQKLGNKERLYKTAFPAFDESMLELDTYVMAVQVNGKLRDTYEFNNSASDYEIKQITINLPKVQKFLEGTEPKKIIFVPRKIVNIIV.

The 'HIGH' region motif lies at 36 to 46 (PYPSGKIHVGH). The short motif at 602–606 (KMSKS) is the 'KMSKS' region element. Lysine 605 contributes to the ATP binding site.

This sequence belongs to the class-I aminoacyl-tRNA synthetase family.

The protein resides in the cytoplasm. The catalysed reaction is tRNA(Leu) + L-leucine + ATP = L-leucyl-tRNA(Leu) + AMP + diphosphate. The sequence is that of Leucine--tRNA ligase from Rickettsia canadensis (strain McKiel).